The chain runs to 388 residues: LL-diaminopimelate aminotransferase (388 aa).

Substrate is bound by residues Tyr16 and Gly41. Residues Tyr70, 104-105, Tyr129, Asn179, Tyr210, and 239-241 contribute to the pyridoxal 5'-phosphate site; these read SK and SLS. Residues Lys105, Tyr129, and Asn179 each coordinate substrate. Residue Lys242 is modified to N6-(pyridoxal phosphate)lysine. Arg250 serves as a coordination point for pyridoxal 5'-phosphate. Substrate is bound at residue Arg368.

This sequence belongs to the class-I pyridoxal-phosphate-dependent aminotransferase family. LL-diaminopimelate aminotransferase subfamily. Homodimer. Pyridoxal 5'-phosphate is required as a cofactor.

It carries out the reaction (2S,6S)-2,6-diaminopimelate + 2-oxoglutarate = (S)-2,3,4,5-tetrahydrodipicolinate + L-glutamate + H2O + H(+). The protein operates within amino-acid biosynthesis; L-lysine biosynthesis via DAP pathway; LL-2,6-diaminopimelate from (S)-tetrahydrodipicolinate (aminotransferase route): step 1/1. In terms of biological role, involved in the synthesis of meso-diaminopimelate (m-DAP or DL-DAP), required for both lysine and peptidoglycan biosynthesis. Catalyzes the direct conversion of tetrahydrodipicolinate to LL-diaminopimelate. This is LL-diaminopimelate aminotransferase from Nitratidesulfovibrio vulgaris (strain DP4) (Desulfovibrio vulgaris).